The following is a 325-amino-acid chain: Biotin synthase (325 aa).

The 230-residue stretch at Tyr-52–Arg-281 folds into the Radical SAM core domain. [4Fe-4S] cluster contacts are provided by Cys-70, Cys-74, and Cys-77. [2Fe-2S] cluster is bound by residues Ser-114, Cys-146, and Cys-206.

The protein belongs to the radical SAM superfamily. Biotin synthase family. In terms of assembly, homodimer. Requires [4Fe-4S] cluster as cofactor. [2Fe-2S] cluster serves as cofactor.

It carries out the reaction (4R,5S)-dethiobiotin + (sulfur carrier)-SH + 2 reduced [2Fe-2S]-[ferredoxin] + 2 S-adenosyl-L-methionine = (sulfur carrier)-H + biotin + 2 5'-deoxyadenosine + 2 L-methionine + 2 oxidized [2Fe-2S]-[ferredoxin]. The protein operates within cofactor biosynthesis; biotin biosynthesis; biotin from 7,8-diaminononanoate: step 2/2. Catalyzes the conversion of dethiobiotin (DTB) to biotin by the insertion of a sulfur atom into dethiobiotin via a radical-based mechanism. This chain is Biotin synthase, found in Syntrophus aciditrophicus (strain SB).